We begin with the raw amino-acid sequence, 372 residues long: Cytochrome b (372 aa).

Helical transmembrane passes span 25-45 (FGSMLLTCLALQTSTGFFLAI), 69-90 (WIIQNLHAIGASMFFICIYTHI), 105-125 (WLSGTMLLIMLMATSFFGYVL), and 170-190 (FFALHFILPFMIISLSSIHII). Heme b-binding residues include His75 and His89. Heme b is bound by residues His174 and His188. His193 lines the a ubiquinone pocket. A run of 4 helical transmembrane segments spans residues 218–238 (YKDTLMITAMITSMLIIMSFM), 280–300 (LGGTLALLMSILILTTAPFTH), 312–332 (LTQIMFWTLIVTFITITWSAT), and 339–358 (FIFISQTASIIYFSFFIINP).

This sequence belongs to the cytochrome b family. As to quaternary structure, the cytochrome bc1 complex contains 3 respiratory subunits (MT-CYB, CYC1 and UQCRFS1), 2 core proteins (UQCRC1 and UQCRC2) and probably 6 low-molecular weight proteins. Heme b serves as cofactor.

The protein resides in the mitochondrion inner membrane. Component of the ubiquinol-cytochrome c reductase complex (complex III or cytochrome b-c1 complex) that is part of the mitochondrial respiratory chain. The b-c1 complex mediates electron transfer from ubiquinol to cytochrome c. Contributes to the generation of a proton gradient across the mitochondrial membrane that is then used for ATP synthesis. This chain is Cytochrome b (MT-CYB), found in Hydrophis semperi (Lake Taal snake).